We begin with the raw amino-acid sequence, 251 residues long: Tryptophan synthase alpha chain (251 aa).

Catalysis depends on proton acceptor residues glutamate 36 and aspartate 47.

The protein belongs to the TrpA family. In terms of assembly, tetramer of two alpha and two beta chains.

It catalyses the reaction (1S,2R)-1-C-(indol-3-yl)glycerol 3-phosphate + L-serine = D-glyceraldehyde 3-phosphate + L-tryptophan + H2O. The protein operates within amino-acid biosynthesis; L-tryptophan biosynthesis; L-tryptophan from chorismate: step 5/5. The alpha subunit is responsible for the aldol cleavage of indoleglycerol phosphate to indole and glyceraldehyde 3-phosphate. In Thermococcus kodakarensis (strain ATCC BAA-918 / JCM 12380 / KOD1) (Pyrococcus kodakaraensis (strain KOD1)), this protein is Tryptophan synthase alpha chain.